Here is a 763-residue protein sequence, read N- to C-terminus: Phosphoglycerol transferase I (763 aa).

4 helical membrane-spanning segments follow: residues 1–21 (MSELLSFALFLASVLIYAWKA), 26–46 (WWFAATLTVLGLFVVLNITLF), 77–97 (ILPGIGIVLGLTAVFGALGWI), and 108–128 (FGYSLLALLLALGSVDASPAF).

This sequence belongs to the OpgB family.

It localises to the cell inner membrane. The enzyme catalyses a phosphatidylglycerol + a membrane-derived-oligosaccharide D-glucose = a 1,2-diacyl-sn-glycerol + a membrane-derived-oligosaccharide 6-(glycerophospho)-D-glucose.. It functions in the pathway glycan metabolism; osmoregulated periplasmic glucan (OPG) biosynthesis. In terms of biological role, transfers a phosphoglycerol residue from phosphatidylglycerol to the membrane-bound nascent glucan backbones. In Escherichia coli O127:H6 (strain E2348/69 / EPEC), this protein is Phosphoglycerol transferase I.